Consider the following 583-residue polypeptide: Aspartyl protease APCB1 (583 aa).

Residues L83–P103 form a helical membrane-spanning segment. The 362-residue stretch at Y203–M564 folds into the Peptidase A1 domain. Active-site residues include D223 and D431.

It belongs to the peptidase A1 family. As to quaternary structure, interacts with BAG6 and BAGP1.

Its subcellular location is the membrane. In terms of biological role, involved in proteolytic processing of BAG6 and plant basal immunity. The chain is Aspartyl protease APCB1 from Arabidopsis thaliana (Mouse-ear cress).